The sequence spans 297 residues: N-acetylneuraminate lyase (297 aa).

Aceneuramate-binding residues include Ser-47 and Thr-48. Residue Tyr-137 is the Proton donor of the active site. Lys-165 functions as the Schiff-base intermediate with substrate in the catalytic mechanism. Thr-167, Gly-189, Asp-191, Glu-192, and Ser-208 together coordinate aceneuramate.

Belongs to the DapA family. NanA subfamily. In terms of assembly, homotetramer.

The protein localises to the cytoplasm. The enzyme catalyses aceneuramate = aldehydo-N-acetyl-D-mannosamine + pyruvate. It participates in amino-sugar metabolism; N-acetylneuraminate degradation; D-fructose 6-phosphate from N-acetylneuraminate: step 1/5. Its function is as follows. Catalyzes the reversible aldol cleavage of N-acetylneuraminic acid (sialic acid; Neu5Ac) to form pyruvate and N-acetylmannosamine (ManNAc) via a Schiff base intermediate. The chain is N-acetylneuraminate lyase from Enterobacter sp. (strain 638).